The primary structure comprises 327 residues: Urokinase plasminogen activator surface receptor (327 aa).

Residues 1 to 23 form the signal peptide; that stretch reads MGLPRRLLLLLLLATTCVPASQG. UPAR/Ly6 domains lie at 24–117, 117–212, and 213–298; these read LQCM…GRYL, LECA…PPNG, and FQCY…SPTG. Intrachain disulfides connect Cys-26-Cys-47, Cys-29-Cys-35, and Cys-40-Cys-68. A glycan (N-linked (GlcNAc...) asparagine) is linked at Asn-32. An N-linked (GlcNAc...) asparagine glycan is attached at Asn-75. Cystine bridges form between Cys-94–Cys-99, Cys-119–Cys-146, Cys-122–Cys-129, Cys-139–Cys-168, Cys-174–Cys-191, Cys-192–Cys-197, Cys-215–Cys-243, Cys-218–Cys-226, Cys-236–Cys-262, Cys-268–Cys-287, and Cys-288–Cys-293. Residues Asn-183, Asn-193, Asn-221, Asn-254, and Asn-282 are each glycosylated (N-linked (GlcNAc...) asparagine). Gly-298 is lipidated: GPI-anchor amidated glycine. The propeptide at 299 to 327 is removed in mature form; that stretch reads GAPRPGPAQLSLIASLLLTLGLWGVLLWT.

Monomer. Interacts (via the UPAR/Ly6 domains) with SRPX2. Interacts with MRC2. Interacts with SORL1 (via N-terminal ectodomain); this interaction decreases PLAUR internalization. The ternary complex composed of PLAUR-PLAU-SERPINE1 also interacts with SORL1. Interacts with CD82; this interaction prevents PLAUR from binding to its high affinity ligand PLAU. Expressed in angiogenic endothelial cells (at protein level).

The protein resides in the cell membrane. It is found in the secreted. In terms of biological role, acts as a receptor for urokinase plasminogen activator. Plays a role in localizing and promoting plasmin formation. Mediates the proteolysis-independent signal transduction activation effects of U-PA. This Mus musculus (Mouse) protein is Urokinase plasminogen activator surface receptor (Plaur).